The primary structure comprises 130 residues: MLRKFKISIDGKEYLVEMEEISESSVPAATPITPTTENTRAASDQKQQSQTPSPAATASAANTMPAPMPGTILKVLVNVGDTVSENQPLMILEAMKMENEIVAGMAGTVSAIHVSSGQTVNAGDNLITIA.

Residues 20–64 (EISESSVPAATPITPTTENTRAASDQKQQSQTPSPAATASAANTM) form a disordered region. Positions 23 to 46 (ESSVPAATPITPTTENTRAASDQK) are enriched in polar residues. Low complexity predominate over residues 47 to 64 (QQSQTPSPAATASAANTM). The 76-residue stretch at 55–130 (AATASAANTM…NAGDNLITIA (76 aa)) folds into the Biotinyl-binding domain. Lysine 96 carries the N6-biotinyllysine modification.

The protein is Biotin carboxyl carrier protein (bcc) of Streptococcus mutans serotype c (strain ATCC 700610 / UA159).